We begin with the raw amino-acid sequence, 324 residues long: Beta-ketoacyl-[acyl-carrier-protein] synthase III (324 aa).

Catalysis depends on residues C112 and H249. Residues 250–254 are ACP-binding; the sequence is QANRR. N279 is a catalytic residue.

This sequence belongs to the thiolase-like superfamily. FabH family. In terms of assembly, homodimer.

It localises to the cytoplasm. It carries out the reaction malonyl-[ACP] + acetyl-CoA + H(+) = 3-oxobutanoyl-[ACP] + CO2 + CoA. Its pathway is lipid metabolism; fatty acid biosynthesis. Functionally, catalyzes the condensation reaction of fatty acid synthesis by the addition to an acyl acceptor of two carbons from malonyl-ACP. Catalyzes the first condensation reaction which initiates fatty acid synthesis and may therefore play a role in governing the total rate of fatty acid production. Possesses both acetoacetyl-ACP synthase and acetyl transacylase activities. Its substrate specificity determines the biosynthesis of branched-chain and/or straight-chain of fatty acids. The polypeptide is Beta-ketoacyl-[acyl-carrier-protein] synthase III (Streptococcus pyogenes serotype M49 (strain NZ131)).